A 159-amino-acid polypeptide reads, in one-letter code: Ribosomal RNA large subunit methyltransferase H (159 aa).

S-adenosyl-L-methionine-binding residues include L76 and G108.

It belongs to the RNA methyltransferase RlmH family. In terms of assembly, homodimer.

The protein localises to the cytoplasm. It catalyses the reaction pseudouridine(1915) in 23S rRNA + S-adenosyl-L-methionine = N(3)-methylpseudouridine(1915) in 23S rRNA + S-adenosyl-L-homocysteine + H(+). Its function is as follows. Specifically methylates the pseudouridine at position 1915 (m3Psi1915) in 23S rRNA. This is Ribosomal RNA large subunit methyltransferase H from Natranaerobius thermophilus (strain ATCC BAA-1301 / DSM 18059 / JW/NM-WN-LF).